A 543-amino-acid polypeptide reads, in one-letter code: MTLLTQIPEWRALETHYRAIRDVHLRRLFAEDPGRGERMTAEAAGLFFDYSKNRVTDETLRLLMALAEARGLRARIDAMFRGERINITENRAVLHVALRAPRGAVILVDGVNVVPDVHAVLDRMAAFAEQVRSGAWSGFTGKPIRNIVNIGIGGSDLGPVMAYEALRSYSRRNLTLRFVSNIDGNDFAEATRDLDPAETLFIVASKTFTTLETMTNARTARAWLLAALGDDAAVARHFVAVSTNAAEVAKFGIDTANMFGFWDWVGGRYSMTSAIGLSTMIALGPDHFRDMLAGFHAMDEHFRTAPFDRNLPVIHGLLTVWYANFFGVETVAILPYDNYLKRFPAYLQQLTMESNGKSVTLSGEPVTYQTGPIYWGEPGTNGQHSFYQLIHQGTRLVLCDFIGFAETLNPLGAHHDLLMANMFAQAEALAFGKTTEEALAEGTPAWLAPHRTFPGNRPSNTFLAERLTPAVLGALVALYEHSVFTQGAIWDINSFDQWGVELGKVLAGRIAPELMSEVAPSPAHDSSTNALIRRYRAWRGRAL.

The active-site Proton donor is the Glu-353. Catalysis depends on residues His-384 and Lys-504.

Belongs to the GPI family.

The protein resides in the cytoplasm. The enzyme catalyses alpha-D-glucose 6-phosphate = beta-D-fructose 6-phosphate. It functions in the pathway carbohydrate biosynthesis; gluconeogenesis. Its pathway is carbohydrate degradation; glycolysis; D-glyceraldehyde 3-phosphate and glycerone phosphate from D-glucose: step 2/4. Catalyzes the reversible isomerization of glucose-6-phosphate to fructose-6-phosphate. The sequence is that of Glucose-6-phosphate isomerase from Roseiflexus castenholzii (strain DSM 13941 / HLO8).